Reading from the N-terminus, the 145-residue chain is RNAP inhibitory protein (145 aa).

The tract at residues 110 to 123 (HIKKLNLNSLAMLS) is C-terminal tail, binds in the RNAP DNA-binding channel.

Belongs to the viral ORF131/RIP family. In terms of assembly, interacts with host RNA polymerase (RNAP) subunits Rpo1N and Rpo2.

The protein resides in the virion. Functionally, plays a role in the inhibition of global transcription by interacting with the RNA polymerase (RNAP) clamp, locking it in a fixed position and inhibiting the formation and/or stability of the pre-initiation complex (PIC). Also overlaps with the transcription factor B binding site; overall RIP probably interferes with DNA loading onto RNAP but does not displace DNA once it is loaded. May play a role in virus particle assembly, possibly by dissociating active RNAP from the virus genome. In Acidianus two-tailed virus (ATV), this protein is RNAP inhibitory protein.